Consider the following 352-residue polypeptide: Pollen-specific protein SF21 (352 aa).

This sequence belongs to the NDRG family. Pollen.

The polypeptide is Pollen-specific protein SF21 (SF21) (Helianthus annuus (Common sunflower)).